The sequence spans 992 residues: Epstein-Barr nuclear antigen 6 (992 aa).

Residues 1 to 70 (MESFEGQGDS…SRGDENRGWM (70 aa)) are disordered. Basic and acidic residues predominate over residues 12–31 (QSPDNERGDNVQTTGEHDQD). The segment at 130-159 (LILDSGLDTQHILCFVMAARQRLQDIRRGP) is interaction with host PIM1. 3 disordered regions span residues 355 to 905 (ATGG…DSMA), 931 to 954 (PLDINATTPKRPRVEESSHGPARC), and 967 to 992 (DNSEISVFPKDAKQTDYDASTESELD). Positions 381–391 (VELESSDDELP) are enriched in acidic residues. Positions 445 to 461 (AQSTPERPGPSEQSSVT) are enriched in polar residues. The span at 479–495 (QPPPVPKPVPVKPTPPP) shows a compositional bias: pro residues. Acidic residues predominate over residues 506–520 (YDDDVIEVIDVETTE). One copy of the 1-1; approximate repeat lies at 551 to 555 (PPTVS). The segment at 551 to 610 (PPTVSPSDTGPPAVGPPAAGPPAAGPPAAGPPAAGPPAAGPPAAGPRILAPLSAGPPAAG) is 12 X 5 AA approximate tandem repeats of P-P-A-A-G. A 2-1; approximate repeat occupies 556-560 (PSDTG). Residues 561 to 565 (PPAVG) form a 3-1; approximate repeat. The span at 563-594 (AVGPPAAGPPAAGPPAAGPPAAGPPAAGPPAA) shows a compositional bias: pro residues. Repeat copies occupy residues 566 to 570 (PPAAG), 571 to 575 (PPAAG), 576 to 580 (PPAAG), 581 to 585 (PPAAG), 586 to 590 (PPAAG), and 591 to 595 (PPAAG). Residues 595–611 (GPRILAPLSAGPPAAGP) are compositionally biased toward low complexity. Residues 596–600 (PRILA) form a 10-1; approximate repeat. The stretch at 601–605 (PLSAG) is one 11-1; approximate repeat. Residues 606-610 (PPAAG) form a 12-1 repeat. Composition is skewed to polar residues over residues 659-676 (TQMQQEPSSHLQSATQPT) and 700-714 (IESSHLSSMSPTQPI). The segment covering 715-724 (SHEEQPRYED) has biased composition (basic and acidic residues). Composition is skewed to low complexity over residues 738–764 (AAQPAPQAPYQGYQEPPAPQAPYQGYQ) and 772–781 (PYQGYQEPPA). 3 repeat units span residues 741–753 (PAPQAPYQGYQEP), 754–766 (PAPQAPYQGYQEP), and 767–779 (PPPQAPYQGYQEP). Residues 741 to 779 (PAPQAPYQGYQEPPAPQAPYQGYQEPPPPQAPYQGYQEP) form a 3 X 13 AA tandem repeats of P-[AP]-P-Q-A-P-Y-Q-G-Y-Q-E-P region. The span at 845–857 (DQVSQFPHLQSET) shows a compositional bias: polar residues. The span at 859–881 (PPRLQLSLVPLVSSSAPSWSSPQ) shows a compositional bias: low complexity. The span at 882 to 899 (PRAPIRPIPTRFPPPPMP) shows a compositional bias: pro residues.

It belongs to the herpesviridae EBNA-6 family. Interacts with host CTPB1; this interaction leads to gene repression, but also seems to interfere with the repressive function of CtBP pre-bound to DNA, leading to EBNA6 mediated up-regulation of many host genes. Interacts with host MYC; this interaction enhances MYC stability. Interacts (via N-terminus) with host RBPJ. Interacts (via N-terminus) with host histone H2AX; this interaction facilitates H2AX proteasomal degradation. Interacts with host TP73; this interaction inhibits TP73-mediated apoptotic pathway. Interacts (via N-terminus) with host PIM1; this interaction upregulates and stabilizes PIM1 and induces cell proliferation by inhibiting the growth suppressive properties of p21.

The protein localises to the host nucleus. It is found in the host nucleus matrix. Its function is as follows. Plays an essential role for the activation and immortalization of human B-cells. Represses transcription of viral promoters TP1 and Cp through interaction with host RBPJ, and inhibits EBNA2-mediated activation of these promoters. Targets host chromatin through interactions with host transcription factors, especially RBPJ and IRF4. Alternatively, EBNA6 also regulates the transcription of the EBV oncogene LMP1 in a cell cycle-dependent manner. Modulates the activity of several host proteins involved in cell cycle regulation including host cyclin A, MYC, RB, p21 and p27 mainly through binding to the host SCF(SKP2) complex. Inhibits the promoter of host H2AX and targets H2AX to proteasomal degradation in order to promote latency and cell proliferation. Upregulates host PIM1 expression and stabilization. Potentiates PIM1 to promote cell proliferation by inhibiting the growth suppressive properties of p21. This chain is Epstein-Barr nuclear antigen 6 (EBNA6), found in Epstein-Barr virus (strain B95-8) (HHV-4).